The primary structure comprises 292 residues: MSEIRLYVTTTEKKSEQVLDLMTPVFEDEELPIATSEIDEKSDIWEASIYLYADDEDDVRARFAALLKPAFPELVIKKEVIPDVDWIAKSLEGLKPVRAGRFLVHGSHDRDKIGSSDIAIEIDAGQAFGTGHHGTTAGCLETIETVLASRRVRNALDLGTGSGVLAIGVRKLRNIPVLATDIDPIAVRVARENVRRNGIASGIALETAPGFHSTAFSRHGPFDLIIANILARPLIKMAPQLVAHLAPGGSVILSGILAEQRWKVLAAYNGAKMRHVRTIWRNGWVTIHLDRP.

Thr-136, Gly-159, Asp-181, and Asn-228 together coordinate S-adenosyl-L-methionine.

This sequence belongs to the methyltransferase superfamily. PrmA family.

Its subcellular location is the cytoplasm. The catalysed reaction is L-lysyl-[protein] + 3 S-adenosyl-L-methionine = N(6),N(6),N(6)-trimethyl-L-lysyl-[protein] + 3 S-adenosyl-L-homocysteine + 3 H(+). Methylates ribosomal protein L11. This Rhizobium rhizogenes (strain K84 / ATCC BAA-868) (Agrobacterium radiobacter) protein is Ribosomal protein L11 methyltransferase.